The sequence spans 370 residues: Phospho-N-acetylmuramoyl-pentapeptide-transferase (370 aa).

Helical transmembrane passes span 15–35 (PLEGKVSAGVLAVVVYAAAFA), 44–64 (LLSLPLLIATLIAAIVTWWGV), 93–113 (MGGLLVVPVGVIVGGLISWSG), 115–135 (AAEQLLAVAFITLAYMVVGGI), 155–175 (LLLQALAAVIFLIWAGMRGWI), 183–203 (FDINLPLNWLIWPLAVFVFLA), 213–233 (GLDGLAAGCGALVFTGMALQL), 240–260 (GDPSLAGFCMAMAGCWIGFLV), 268–288 (VFMGDTGSLAMGGALTAVALL), 296–316 (LIMGGIFLAESLSVIIQVWVF), and 347–367 (QLVVPGFWLATVFLVLIGIFF).

The protein belongs to the glycosyltransferase 4 family. MraY subfamily. Requires Mg(2+) as cofactor.

It localises to the cell inner membrane. The catalysed reaction is UDP-N-acetyl-alpha-D-muramoyl-L-alanyl-gamma-D-glutamyl-meso-2,6-diaminopimeloyl-D-alanyl-D-alanine + di-trans,octa-cis-undecaprenyl phosphate = di-trans,octa-cis-undecaprenyl diphospho-N-acetyl-alpha-D-muramoyl-L-alanyl-D-glutamyl-meso-2,6-diaminopimeloyl-D-alanyl-D-alanine + UMP. Its pathway is cell wall biogenesis; peptidoglycan biosynthesis. Catalyzes the initial step of the lipid cycle reactions in the biosynthesis of the cell wall peptidoglycan: transfers peptidoglycan precursor phospho-MurNAc-pentapeptide from UDP-MurNAc-pentapeptide onto the lipid carrier undecaprenyl phosphate, yielding undecaprenyl-pyrophosphoryl-MurNAc-pentapeptide, known as lipid I. This is Phospho-N-acetylmuramoyl-pentapeptide-transferase from Synechococcus sp. (strain CC9311).